Consider the following 373-residue polypeptide: Protein-glutamate methylesterase/protein-glutamine glutaminase 1 (373 aa).

Positions R16 to Q133 constitute a Response regulatory domain. D67 carries the 4-aspartylphosphate modification. Residues R175–A367 form the CheB-type methylesterase domain. Residues S187, H213, and D309 contribute to the active site.

It belongs to the CheB family. Post-translationally, phosphorylated by CheA. Phosphorylation of the N-terminal regulatory domain activates the methylesterase activity.

It is found in the cytoplasm. It catalyses the reaction [protein]-L-glutamate 5-O-methyl ester + H2O = L-glutamyl-[protein] + methanol + H(+). The enzyme catalyses L-glutaminyl-[protein] + H2O = L-glutamyl-[protein] + NH4(+). Involved in chemotaxis. Part of a chemotaxis signal transduction system that modulates chemotaxis in response to various stimuli. Catalyzes the demethylation of specific methylglutamate residues introduced into the chemoreceptors (methyl-accepting chemotaxis proteins or MCP) by CheR. Also mediates the irreversible deamidation of specific glutamine residues to glutamic acid. The protein is Protein-glutamate methylesterase/protein-glutamine glutaminase 1 of Albidiferax ferrireducens (strain ATCC BAA-621 / DSM 15236 / T118) (Rhodoferax ferrireducens).